The following is a 434-amino-acid chain: Probable carboxypeptidase BDCG_03757 (434 aa).

An N-terminal signal peptide occupies residues 1 to 20 (MKLSHLAAALSAQLVAPVAA). 2 N-linked (GlcNAc...) asparagine glycosylation sites follow: Asn-136 and Asn-150. A Zn(2+)-binding site is contributed by Asp-160. The Proton acceptor role is filled by Glu-192. Glu-193 provides a ligand contact to Zn(2+). Asn-343 carries an N-linked (GlcNAc...) asparagine glycan.

This sequence belongs to the peptidase M20A family. Zn(2+) serves as cofactor.

The protein localises to the secreted. This chain is Probable carboxypeptidase BDCG_03757, found in Ajellomyces dermatitidis (strain ER-3 / ATCC MYA-2586) (Blastomyces dermatitidis).